The primary structure comprises 352 residues: Uroporphyrinogen decarboxylase (352 aa).

Substrate is bound by residues arginine 26–arginine 30, phenylalanine 45, aspartate 76, tyrosine 153, serine 208, and histidine 323.

This sequence belongs to the uroporphyrinogen decarboxylase family. Homodimer.

It localises to the cytoplasm. It carries out the reaction uroporphyrinogen III + 4 H(+) = coproporphyrinogen III + 4 CO2. It participates in porphyrin-containing compound metabolism; protoporphyrin-IX biosynthesis; coproporphyrinogen-III from 5-aminolevulinate: step 4/4. Catalyzes the decarboxylation of four acetate groups of uroporphyrinogen-III to yield coproporphyrinogen-III. This chain is Uroporphyrinogen decarboxylase, found in Prochlorococcus marinus (strain MIT 9313).